Consider the following 295-residue polypeptide: Protein PHR1-LIKE 2 (295 aa).

An HTH myb-type domain is found at 38–98 (TDPKPRLRWT…HLQKFRLGRQ (61 aa)). Residues 69–94 (PKTIMRTMGVKGLTLYHLKSHLQKFR) constitute a DNA-binding region (H-T-H motif). The tract at residues 96–138 (GRQAGKESTENSKDASCVGESQDTGSSSTSSMRMAQQEQNEGY) is disordered. Positions 99–108 (AGKESTENSK) are enriched in basic and acidic residues. Over residues 127–138 (MRMAQQEQNEGY) the composition is skewed to polar residues. Residues 141-161 (TEALRAQMEVQRRLHDQLEVQ) are a coiled coil. The LHEQLE signature appears at 154-159 (LHDQLE).

This sequence belongs to the MYB-CC family. As to quaternary structure, homo- and heterodimers. Interacts with PHL3, but not with PHR1.

It is found in the nucleus. Transcriptional activator. Acts redundantly with PHR1 as a key component of the central regulatory system controlling transcriptional responses to Pi starvation. Binds in a sequence-specific manner to phosphate starvation-regulated promoters. The polypeptide is Protein PHR1-LIKE 2 (Arabidopsis thaliana (Mouse-ear cress)).